A 150-amino-acid polypeptide reads, in one-letter code: Transmembrane protein 35B (150 aa).

The first 21 residues, 1–21, serve as a signal peptide directing secretion; that stretch reads MSFRVGVLRVLLGVFFALTGA. The next 3 membrane-spanning stretches (helical) occupy residues 62 to 82, 84 to 104, and 111 to 131; these read TAVGWLELLAGLLLVVGPPVL, EISNVLLILLMMGAVFTLVVL, and YVPAAVCLGLLLLLDSCHFLA.

Belongs to the DoxX family.

It localises to the membrane. This Mus musculus (Mouse) protein is Transmembrane protein 35B.